Consider the following 1043-residue polypeptide: Glutamate receptor ionotropic, NMDA 3B (1043 aa).

The signal sequence occupies residues 1–22 (MEFVRALWLGLALALGPGSAGG). Residues 23-574 (HPQPCGVLAR…PIGAFMWPLH (552 aa)) lie on the Extracellular side of the membrane. Asn69, Asn344, Asn451, and Asn465 each carry an N-linked (GlcNAc...) asparagine glycan. Cystine bridges form between Cys439–Cys475 and Cys445–Cys476. 3 residues coordinate glycine: Ser531, Ser533, and Arg538. The D-serine site is built by Ser533 and Arg538. Residues 575–594 (WSTWLGVFAALHLTALFLTV) form a helical membrane-spanning segment. Residues 595–615 (YEWRSPYGLTPRGRNRSTVFS) are Cytoplasmic-facing. An intramembrane region (discontinuously helical) is located at residues 616–627 (YSSALNLCYAIL). Residues 628 to 641 (FRRTVSSKTPKCPT) are Cytoplasmic-facing. The chain crosses the membrane as a helical span at residues 642-661 (GRLLMNLWAIFCLLVLSSYT). Residues 662-832 (ANLAAVMVGD…TLQMSIYHFA (171 aa)) are Extracellular-facing. Ser701 contacts glycine. Positions 701, 702, and 745 each coordinate D-serine. Residue Asp745 coordinates glycine. N-linked (GlcNAc...) asparagine glycosylation is present at Asn786. The chain crosses the membrane as a helical span at residues 833–848 (GLFVLLCLGLGSALLS). Over 849 to 1043 (SLGEHAFFRL…PHSGRPGSQE (195 aa)) the chain is Cytoplasmic. Disordered regions lie at residues 882–924 (ALNT…WKRA) and 1012–1043 (GDSA…GSQE). Positions 979–1012 (QPGELQELERRIEVARERLRQALVRRGQLLAQLG) are involved in the trafficking and surface expression of NMDARs. A compositionally biased stretch (low complexity) spans 1024-1035 (QARAAPAEAPPH).

This sequence belongs to the glutamate-gated ion channel (TC 1.A.10.1) family. NR3B/GRIN3B subfamily. Forms heterotetrameric channels that contain at least two GluN1 subunits and at least a combination of one GluN2 and one GluN3 subunits (in vitro). Forms heterotetrameric channels composed of two GluN1/zeta subunits (GRIN1), and two identical GluN3 subunits (GRIN3A or GRIN3B) (in vitro). Does not form functional homomeric channels.

The protein localises to the cell membrane. It localises to the postsynaptic cell membrane. The enzyme catalyses Ca(2+)(in) = Ca(2+)(out). The catalysed reaction is Na(+)(in) = Na(+)(out). In terms of biological role, component of a non-conventional N-methyl-D-aspartate (NMDA) receptors (NMDARs) that function as heterotetrameric, ligand-gated cation channels with low calcium permeability and low voltage-dependent block by Mg(2+). Forms glutamatergic receptor complexes with GluN1 and GluN2 subunits which are activated by glycine binding to the GluN1 and GluN3 subunits and L-glutamate binding to GluN2 subunits. Forms excitatory glycinergic receptor complexes with GluN1 alone which are activated by glycine binding to the GluN1 and GluN3 subunits. GluN3B subunit also binds D-serine and, in the absence of glycine, activates glycinergic receptor complexes, but with lower efficacy than glycine. Each GluN3 subunit confers differential attributes to channel properties, including activation, deactivation and desensitization kinetics, pH sensitivity, Ca2(+) permeability, and binding to allosteric modulators. The chain is Glutamate receptor ionotropic, NMDA 3B from Homo sapiens (Human).